Consider the following 842-residue polypeptide: Netrin receptor UNC5A (842 aa).

The first 25 residues, 1–25, serve as a signal peptide directing secretion; the sequence is MAVRPGLWPALLGIVLAAWLRGSGA. The Extracellular segment spans residues 26–306; it reads QQSATVANPV…ASGPEDVALY (281 aa). The 98-residue stretch at 44–141 folds into the Ig-like domain; sequence PHFLVEPEDV…SGTTKSQKAY (98 aa). Cystine bridges form between cysteine 65-cysteine 126, cysteine 77-cysteine 124, and cysteine 170-cysteine 221. N-linked (GlcNAc...) asparagine glycosylation is found at asparagine 107 and asparagine 218. In terms of domain architecture, Ig-like C2-type spans 155–234; sequence PLAKEVSLEQ…NIVARRRSAS (80 aa). Positions 242–294 constitute a TSP type-1 domain; the sequence is DGSWSPWSKWSACGLDCTHWRSRECSDPAPRNGGEECQGTDLDTRNCTSDLCV. 3 C-linked (Man) tryptophan glycosylation sites follow: tryptophan 245, tryptophan 248, and tryptophan 251. 3 cysteine pairs are disulfide-bonded: cysteine 254/cysteine 288, cysteine 258/cysteine 293, and cysteine 266/cysteine 278. Asparagine 287 carries an N-linked (GlcNAc...) asparagine glycan. The helical transmembrane segment at 307–327 threads the bilayer; sequence VGLIAVAVCLVLLLLVLILVY. The Cytoplasmic segment spans residues 328 to 842; that stretch reads CRKKEGLDSD…GLFTVSEAEC (515 aa). The ZU5 domain occupies 441–584; that stretch reads NMTYGTFNFL…LGRFALVGEA (144 aa). An interaction with DCC region spans residues 605–623; the sequence is SLEYNIRVYCLHDTHDALK. Positions 761-841 constitute a Death domain; the sequence is QKIISSLDPP…AGLFTVSEAE (81 aa).

Belongs to the unc-5 family. In terms of assembly, homodimer and homooligomer. Interacts with the cytoplasmic part of DCC. Interacts with MAGED1. Interacts with PRKCABP, possibly mediating some interaction with PKC. Interacts (via extracellular domain) with FLRT2 (via extracellular domain). Interacts (via extracellular domain) with FLRT3 (via extracellular domain). In terms of processing, phosphorylated on cytoplasmic tyrosine residues. Phosphorylated by PKC in vitro. Proteolytically cleaved by caspases during apoptosis. The cleavage does not take place when the receptor is associated with netrin ligand. Its cleavage by caspases is required to induce apoptosis. Post-translationally, the two extracellular TSRs of UNC5A contain WxxWxxWxxC motifs that can be C-mannosylated on all tryptophans. DPY19L1 preferentially mannosylates the first two tryptophans and DPY19L3 prefers the third. C-mannosylation by DPY19L1 is required for transport of UNC5A from the endoplasmic reticulum to the cell surface.

It localises to the cell membrane. Its subcellular location is the membrane raft. The protein localises to the cell projection. The protein resides in the neuron projection. In terms of biological role, receptor for netrin required for axon guidance. Functions in the netrin signaling pathway and promotes neurite outgrowth in response to NTN1. Mediates axon repulsion of neuronal growth cones in the developing nervous system in response to netrin. Axon repulsion in growth cones may be mediated by its association with DCC that may trigger signaling for repulsion. It also acts as a dependence receptor required for apoptosis induction when not associated with netrin ligand. This Homo sapiens (Human) protein is Netrin receptor UNC5A (UNC5A).